A 260-amino-acid polypeptide reads, in one-letter code: DNA-directed RNA polymerase subunit Rpo3 (260 aa).

This sequence belongs to the archaeal Rpo3/eukaryotic RPB3 RNA polymerase subunit family. As to quaternary structure, part of the RNA polymerase complex.

The protein localises to the cytoplasm. It catalyses the reaction RNA(n) + a ribonucleoside 5'-triphosphate = RNA(n+1) + diphosphate. Functionally, DNA-dependent RNA polymerase (RNAP) catalyzes the transcription of DNA into RNA using the four ribonucleoside triphosphates as substrates. This chain is DNA-directed RNA polymerase subunit Rpo3, found in Pyrobaculum aerophilum (strain ATCC 51768 / DSM 7523 / JCM 9630 / CIP 104966 / NBRC 100827 / IM2).